Reading from the N-terminus, the 161-residue chain is Phosphopantetheine adenylyltransferase (161 aa).

T11 is a substrate binding site. Residues T11–F12 and H19 each bind ATP. The substrate site is built by K43, T75, and R89. ATP contacts are provided by residues G90–R92, E100, and Y125–S131.

This sequence belongs to the bacterial CoaD family. In terms of assembly, homohexamer. Mg(2+) serves as cofactor.

It localises to the cytoplasm. It carries out the reaction (R)-4'-phosphopantetheine + ATP + H(+) = 3'-dephospho-CoA + diphosphate. The protein operates within cofactor biosynthesis; coenzyme A biosynthesis; CoA from (R)-pantothenate: step 4/5. Functionally, reversibly transfers an adenylyl group from ATP to 4'-phosphopantetheine, yielding dephospho-CoA (dPCoA) and pyrophosphate. The chain is Phosphopantetheine adenylyltransferase from Listeria welshimeri serovar 6b (strain ATCC 35897 / DSM 20650 / CCUG 15529 / CIP 8149 / NCTC 11857 / SLCC 5334 / V8).